The sequence spans 79 residues: Putative membrane protein insertion efficiency factor (79 aa).

The protein belongs to the UPF0161 family.

It localises to the cell inner membrane. Could be involved in insertion of integral membrane proteins into the membrane. The protein is Putative membrane protein insertion efficiency factor of Prochlorococcus marinus (strain NATL2A).